Consider the following 579-residue polypeptide: Adenine deaminase (579 aa).

Belongs to the metallo-dependent hydrolases superfamily. Adenine deaminase family. Mn(2+) serves as cofactor.

The enzyme catalyses adenine + H2O + H(+) = hypoxanthine + NH4(+). This is Adenine deaminase from Listeria monocytogenes serotype 4b (strain F2365).